We begin with the raw amino-acid sequence, 186 residues long: UPF0301 protein NTHI0415 (186 aa).

The protein belongs to the UPF0301 (AlgH) family.

This is UPF0301 protein NTHI0415 from Haemophilus influenzae (strain 86-028NP).